Reading from the N-terminus, the 358-residue chain is Putative myc-like protein MYCLP1 (358 aa).

Disordered regions lie at residues 150-171 (ACSR…TVKK) and 219-245 (QEGA…DKED). The span at 227–242 (PPKEALEREAPGGKDD) shows a compositional bias: basic and acidic residues. Positions 274–326 (WTKKKYHSYLERKRRNDQRSRFLALRDEVPALASCSRVSKVMILVKATEYLHE) constitute a bHLH domain.

Efficient DNA binding requires dimerization with another bHLH protein. Binds DNA as a heterodimer with MAX. Detected in adult testis.

It localises to the nucleus. The polypeptide is Putative myc-like protein MYCLP1 (MYCLP1) (Homo sapiens (Human)).